The primary structure comprises 317 residues: Melanocyte-stimulating hormone receptor (317 aa).

Residues 1–37 (MPVQGSQRRLLGSLNSTPTATPKLGLAANQTGAQCLE) are Extracellular-facing. A glycan (N-linked (GlcNAc...) asparagine) is linked at Asn29. Residues 38-63 (VSIPDGLFLSLGLVSLVENVLVVAAI) traverse the membrane as a helical segment. The Cytoplasmic portion of the chain corresponds to 64–72 (ARNRNLHSP). A helical membrane pass occupies residues 73 to 93 (MYCFICCLALSDLLVSGSNML). The Extracellular portion of the chain corresponds to 94–118 (ETAVILLLEAGALAARAAVVQQLDN). A helical transmembrane segment spans residues 119 to 140 (VIDVITCSSMLSSLCFLGAIAM). At 141–163 (DRYISIFYALRYHSIVTLPRARG) the chain is on the cytoplasmic side. Residues 164–183 (VVAAIWVASILFSTLFIAYY) form a helical membrane-spanning segment. Residues 184 to 191 (DHVAVLLC) lie on the Extracellular side of the membrane. Residues 192 to 211 (LVVFFLAMLVLMAVLYVHML) form a helical membrane-spanning segment. The Cytoplasmic segment spans residues 212-240 (ARACQHAQGIAQLHKRQRPAHQGVGLKGA). The helical transmembrane segment at 241–266 (ATLTILLGIFFLCWGPFFLHLTLIVL) threads the bilayer. Residues 267–279 (CPQHPTCSCIFKN) are Extracellular-facing. Residues 280–300 (FNLFLALIICNAIIDPLIYAF) traverse the membrane as a helical segment. Topologically, residues 301–317 (RSQELRRTLKKVLLCSW) are cytoplasmic. The S-palmitoyl cysteine moiety is linked to residue Cys315.

Belongs to the G-protein coupled receptor 1 family. In terms of assembly, interacts with MGRN1, but does not undergo MGRN1-mediated ubiquitination; this interaction competes with GNAS-binding and thus inhibits agonist-induced cAMP production. Interacts with OPN3; the interaction results in a decrease in MC1R-mediated cAMP signaling and ultimately a decrease in melanin production in melanocytes.

The protein resides in the cell membrane. Functionally, receptor for MSH (alpha, beta and gamma) and ACTH. The activity of this receptor is mediated by G proteins which activate adenylate cyclase. Mediates melanogenesis, the production of eumelanin (black/brown) and phaeomelanin (red/yellow), via regulation of cAMP signaling in melanocytes. The protein is Melanocyte-stimulating hormone receptor (MC1R) of Presbytis comata (Grizzled leaf monkey).